We begin with the raw amino-acid sequence, 2332 residues long: Phosphatidylinositol phosphatase PTPRQ (2332 aa).

The N-terminal stretch at 1–35 (MKKVPIKPEQPEKLRAFNISTHSFSLHWSLPSGHV) is a signal peptide. 18 Fibronectin type-III domains span residues 36–99 (ERYQ…TKPG), 100–195 (PPVF…TAES), 199–294 (KVVN…SSST), 350–438 (PPQN…PPDV), 441–539 (AVFD…SHPD), 514–606 (GLYE…SVRT), 610–705 (VPSS…TSED), 710–799 (SPQD…TSET), 804–894 (APEN…TEED), 899–988 (PPQD…TPEG), 993–1093 (PPKD…TDQD), 1098–1190 (FVGN…TEED), 1192–1282 (PETS…TDES), 1287–1380 (PPQN…TQES), 1384–1470 (VVQN…LPET), 1474–1578 (VPTN…TLPG), 1583–1681 (PPEN…TLES), and 1686–1787 (PPNN…IKAP). Topologically, residues 36-1947 (ERYQVDLVPD…GEGLSERTVE (1912 aa)) are extracellular. An N-linked (GlcNAc...) asparagine glycan is attached at asparagine 94. Asparagine 202 and asparagine 394 each carry an N-linked (GlcNAc...) asparagine glycan. N-linked (GlcNAc...) asparagine glycosylation is found at asparagine 944, asparagine 1038, asparagine 1080, and asparagine 1101. Asparagine 1290 and asparagine 1295 each carry an N-linked (GlcNAc...) asparagine glycan. Asparagine 1844 carries N-linked (GlcNAc...) asparagine glycosylation. Residues 1948 to 1968 (IILSVTLCILSIILLGTAIFA) form a helical membrane-spanning segment. Topologically, residues 1969–2332 (FARIRQKQKE…VELEWEETTM (364 aa)) are cytoplasmic. Residues 2036 to 2292 (FQEEFSELPK…IFLHQCILDL (257 aa)) form the Tyrosine-protein phosphatase domain. Catalysis depends on cysteine 2233, which acts as the Phosphocysteine intermediate.

Belongs to the protein-tyrosine phosphatase family. Receptor class 2A subfamily. As to quaternary structure, interacts with TPRN. TPRN, CLIC5 and PTPQR form concentric rings at the base of stereocilia and may form a complex. In developing kidney, it localizes to the basal membrane of podocytes, beginning when podocyte progenitors can first be identified in the embryonic kidney (at protein level). Expressed in lung and kidney.

It localises to the cell projection. The protein localises to the stereocilium. The protein resides in the apical cell membrane. It is found in the basal cell membrane. The catalysed reaction is a 1,2-diacyl-sn-glycero-3-phospho-(1D-myo-inositol-3,4,5-trisphosphate) + H2O = a 1,2-diacyl-sn-glycero-3-phospho-(1D-myo-inositol-4,5-bisphosphate) + phosphate. It carries out the reaction a 1,2-diacyl-sn-glycero-3-phospho-(1D-myo-inositol-3,4,5-trisphosphate) + H2O = a 1,2-diacyl-sn-glycero-3-phospho-(1D-myo-inositol-3,4-bisphosphate) + phosphate. It catalyses the reaction a 1,2-diacyl-sn-glycero-3-phospho-(1D-myo-inositol-3,5-bisphosphate) + H2O = a 1,2-diacyl-sn-glycero-3-phospho-(1D-myo-inositol-5-phosphate) + phosphate. The enzyme catalyses a 1,2-diacyl-sn-glycero-3-phospho-(1D-myo-inositol-3,5-bisphosphate) + H2O = a 1,2-diacyl-sn-glycero-3-phospho-(1D-myo-inositol-3-phosphate) + phosphate. Functionally, dephosphorylates phosphatidylinositol phosphates, such as phosphatidylinositol 3,4,5-trisphosphate (PIP3) and phosphatidylinositol 3,5-diphosphates, with preference for PIP3. Phosphate can be hydrolyzed from the D3 and D5 positions in the inositol ring. Has low tyrosine-protein phosphatase activity in vitro; however, the relevance of such activity in vivo is unclear. Plays an important role in adipogenesis of mesenchymal stem cells (MSCs). Regulates the phosphorylation state of AKT1 by regulating the levels of PIP3 in MSCs and preadipocyte cells. Required for hair bundle maturation, a process that enables hair cells to detect and transmit sound and balance signals effectively, therefore affecting auditory function. May act by regulating the level of phosphatidylinositol 4,5-bisphosphate (PIP2) level in the basal region of hair bundles. This Homo sapiens (Human) protein is Phosphatidylinositol phosphatase PTPRQ (PTPRQ).